The sequence spans 383 residues: MIISSGNDYRAAAQRRLPPFLFHYIDGGAYAEYTLKRNVQDLSEIALRQRVLNDMSALSLETKLFNETLSMPVALAPVGLTGMYARRGEVQAAMAADKKGIPFTLSTVSVCPIEEVAPAINRPMWFQLYVLRDRGFMRNALERAKAAGCSTLVFTVDMPVPGARYRDAHSGMSGPNAAMRRYMQSVFHPHWSWNVGLMGRPHDLGNISKYLGKPTGLEDYIGWLGSNFDPSISWKDLEWIREFWDGPMVIKGILDPEDAKDAVRFGADGIVVSNHGGRQLDGVMSSARALPAIADAVKGDLAILADSGIRNGLDVVRMLALGADTVLLGRAFVYALAAAGGQGVSNLLDLIDKEMRVAMTLTGAKSISDINADCLVQAIKQGL.

Residues 1–380 (MIISSGNDYR…NADCLVQAIK (380 aa)) enclose the FMN hydroxy acid dehydrogenase domain. Tyr-24 serves as a coordination point for substrate. Residues Ser-106 and Gln-127 each coordinate FMN. Position 129 (Tyr-129) interacts with substrate. An FMN-binding site is contributed by Thr-155. Substrate is bound at residue Arg-164. FMN is bound at residue Lys-251. The active-site Proton acceptor is the His-275. Arg-278 is a substrate binding site. FMN is bound at residue 306 to 330 (DSGIRNGLDVVRMLALGADTVLLGR).

The protein belongs to the FMN-dependent alpha-hydroxy acid dehydrogenase family. FMN is required as a cofactor.

Its subcellular location is the cell inner membrane. It catalyses the reaction (S)-lactate + A = pyruvate + AH2. Its function is as follows. Catalyzes the conversion of L-lactate to pyruvate. Is coupled to the respiratory chain. This chain is L-lactate dehydrogenase, found in Acinetobacter baumannii (strain AB307-0294).